The following is a 614-amino-acid chain: Chaperone protein DnaK (614 aa).

Position 173 is a phosphothreonine; by autocatalysis (Thr173). 2 stretches are compositionally biased toward basic and acidic residues: residues 490 to 509 (EENAEADKKRREESDLRNEA) and 529 to 542 (EEDKQNAEDKKEAL). Disordered regions lie at residues 490–510 (EENAEADKKRREESDLRNEAD), 524–555 (GENISEEDKQNAEDKKEALKSALEGEDIDDIK), and 575–614 (QAAQAQQQAQGEDANASQDSNVEDADFKEVKDDDNQDNQK). Residues 575 to 584 (QAAQAQQQAQ) are compositionally biased toward low complexity. Basic and acidic residues predominate over residues 599–614 (ADFKEVKDDDNQDNQK).

This sequence belongs to the heat shock protein 70 family.

Functionally, acts as a chaperone. The chain is Chaperone protein DnaK from Staphylococcus saprophyticus subsp. saprophyticus (strain ATCC 15305 / DSM 20229 / NCIMB 8711 / NCTC 7292 / S-41).